The chain runs to 381 residues: GDP-mannose transporter (381 aa).

Topologically, residues 1–39 (MVESKKTDDYAIEMDKIDQGSKNFEAAAPPQPRSVPSSS) are cytoplasmic. Residues 40–60 (LSGNPVLPVLAYCGSSILMTV) form a helical membrane-spanning segment. The Lumenal segment spans residues 61–68 (MNKYVLSG). The helical transmembrane segment at 69 to 89 (LDFNLNFFLLCVQSIVCIIAI) threads the bilayer. Over 90–109 (QTCKFCGLITYRDFSADEAK) the chain is Cytoplasmic. Residues 110-126 (KWFPISLLLIGMIYTGS) traverse the membrane as a helical segment. Residues 127 to 133 (KALQFLS) are Lumenal-facing. Residues 134-150 (IPVYTIFKNLTIILIAY) form a helical membrane-spanning segment. At 151–159 (GEVLWFGGS) the chain is on the cytoplasmic side. A helical membrane pass occupies residues 160-181 (VTGLTLFSFGLMVLSSIIAAWA). The Lumenal portion of the chain corresponds to 182 to 199 (DIKHAVESSGDTSAQVST). Residues 200 to 220 (LNAGYIWMLINCLCTSSYVLG) traverse the membrane as a helical segment. The Cytoplasmic segment spans residues 221–232 (MRKRIKLTNFKD). A helical transmembrane segment spans residues 233 to 253 (FDTMFYNNLLSIPVLVVLTGL). Residues 254 to 273 (MEDWSSANIDRNFPQADRSS) lie on the Lumenal side of the membrane. A helical transmembrane segment spans residues 274-294 (IMFAMILSGLSSVFISYTSAW). Topologically, residues 295–302 (CVRVTSST) are cytoplasmic. Residues 303–323 (TYSMVGALNKLPIALSGLIFF) form a helical membrane-spanning segment. The Lumenal segment spans residues 324–326 (DAP). A helical membrane pass occupies residues 327 to 347 (VTFPSVSAIAVGFVSGIVYAI). The Cytoplasmic portion of the chain corresponds to 348–381 (AKIKQNAKPKTGVLPTSNPLVSASSQSMRDSLRS).

It belongs to the TPT transporter family. SLC35D subfamily. Homooligomer.

The protein localises to the golgi apparatus membrane. It localises to the cytoplasmic vesicle membrane. Its subcellular location is the endoplasmic reticulum membrane. Functionally, involved in the import of GDP-mannose from the cytoplasm into the Golgi lumen. The polypeptide is GDP-mannose transporter (gmt1) (Aspergillus oryzae (strain ATCC 42149 / RIB 40) (Yellow koji mold)).